The primary structure comprises 115 residues: Nucleoid-associated protein Ccel_0243 (115 aa).

Belongs to the YbaB/EbfC family. As to quaternary structure, homodimer.

Its subcellular location is the cytoplasm. The protein localises to the nucleoid. Its function is as follows. Binds to DNA and alters its conformation. May be involved in regulation of gene expression, nucleoid organization and DNA protection. The chain is Nucleoid-associated protein Ccel_0243 from Ruminiclostridium cellulolyticum (strain ATCC 35319 / DSM 5812 / JCM 6584 / H10) (Clostridium cellulolyticum).